We begin with the raw amino-acid sequence, 228 residues long: L-ribulose-5-phosphate 4-epimerase UlaF (228 aa).

Residues 26–27 (GN), 43–44 (SG), and 72–73 (SS) each bind substrate. Zn(2+)-binding residues include aspartate 74, histidine 93, and histidine 95. Aspartate 118 functions as the Proton donor/acceptor in the catalytic mechanism. Zn(2+) is bound at residue histidine 167. Tyrosine 225 serves as the catalytic Proton donor/acceptor.

The protein belongs to the aldolase class II family. AraD/FucA subfamily. Requires Zn(2+) as cofactor.

It carries out the reaction L-ribulose 5-phosphate = D-xylulose 5-phosphate. The protein operates within cofactor degradation; L-ascorbate degradation; D-xylulose 5-phosphate from L-ascorbate: step 4/4. In terms of biological role, catalyzes the isomerization of L-ribulose 5-phosphate to D-xylulose 5-phosphate. Is involved in the anaerobic L-ascorbate utilization. This chain is L-ribulose-5-phosphate 4-epimerase UlaF, found in Shigella flexneri.